Here is a 247-residue protein sequence, read N- to C-terminus: Probable transcriptional regulatory protein DVU_2259 (247 aa).

Residues 1 to 22 (MAGHSKWANIQHRKGRQDAKRG) are disordered.

Belongs to the TACO1 family.

Its subcellular location is the cytoplasm. In Nitratidesulfovibrio vulgaris (strain ATCC 29579 / DSM 644 / CCUG 34227 / NCIMB 8303 / VKM B-1760 / Hildenborough) (Desulfovibrio vulgaris), this protein is Probable transcriptional regulatory protein DVU_2259.